A 361-amino-acid chain; its full sequence is Probable pectinesterase 50 (361 aa).

The first 22 residues, 1 to 22 (MGYISMSVVAFLVVFASPVVLA), serve as a signal peptide directing secretion. Gln174 lines the substrate pocket. Asp197 acts as the Proton donor in catalysis. The Nucleophile role is filled by Asp218. Substrate contacts are provided by Arg275 and Trp277.

Belongs to the pectinesterase family. In terms of tissue distribution, expressed in flower buds.

The protein localises to the secreted. The protein resides in the cell wall. The catalysed reaction is [(1-&gt;4)-alpha-D-galacturonosyl methyl ester](n) + n H2O = [(1-&gt;4)-alpha-D-galacturonosyl](n) + n methanol + n H(+). It functions in the pathway glycan metabolism; pectin degradation; 2-dehydro-3-deoxy-D-gluconate from pectin: step 1/5. In terms of biological role, acts in the modification of cell walls via demethylesterification of cell wall pectin. The sequence is that of Probable pectinesterase 50 (PME50) from Arabidopsis thaliana (Mouse-ear cress).